The following is a 437-amino-acid chain: tRNA-2-methylthio-N(6)-dimethylallyladenosine synthase (437 aa).

Residues 1 to 115 (MKVYIETMGC…ISQVIHKEKA (115 aa)) form the MTTase N-terminal domain. Residues C10, C46, C78, C148, C152, and C155 each coordinate [4Fe-4S] cluster. One can recognise a Radical SAM core domain in the interval 134 to 367 (KKAQIRSLLN…QNRHKEILEE (234 aa)). The region spanning 370–436 (KLEVGKTHVV…KGRLMATTKG (67 aa)) is the TRAM domain.

It belongs to the methylthiotransferase family. MiaB subfamily. In terms of assembly, monomer. [4Fe-4S] cluster serves as cofactor.

The protein localises to the cytoplasm. It catalyses the reaction N(6)-dimethylallyladenosine(37) in tRNA + (sulfur carrier)-SH + AH2 + 2 S-adenosyl-L-methionine = 2-methylsulfanyl-N(6)-dimethylallyladenosine(37) in tRNA + (sulfur carrier)-H + 5'-deoxyadenosine + L-methionine + A + S-adenosyl-L-homocysteine + 2 H(+). In terms of biological role, catalyzes the methylthiolation of N6-(dimethylallyl)adenosine (i(6)A), leading to the formation of 2-methylthio-N6-(dimethylallyl)adenosine (ms(2)i(6)A) at position 37 in tRNAs that read codons beginning with uridine. The polypeptide is tRNA-2-methylthio-N(6)-dimethylallyladenosine synthase (Helicobacter pylori (strain G27)).